The sequence spans 317 residues: Methionyl-tRNA formyltransferase (317 aa).

112-115 (SLLP) contacts (6S)-5,6,7,8-tetrahydrofolate.

Belongs to the Fmt family.

The enzyme catalyses L-methionyl-tRNA(fMet) + (6R)-10-formyltetrahydrofolate = N-formyl-L-methionyl-tRNA(fMet) + (6S)-5,6,7,8-tetrahydrofolate + H(+). In terms of biological role, attaches a formyl group to the free amino group of methionyl-tRNA(fMet). The formyl group appears to play a dual role in the initiator identity of N-formylmethionyl-tRNA by promoting its recognition by IF2 and preventing the misappropriation of this tRNA by the elongation apparatus. In Mycoplasma mycoides subsp. mycoides SC (strain CCUG 32753 / NCTC 10114 / PG1), this protein is Methionyl-tRNA formyltransferase.